The chain runs to 101 residues: Acylphosphatase (101 aa).

Residues 15–101 (RMYARVYGLV…KGEFEDFETY (87 aa)) enclose the Acylphosphatase-like domain. Residues arginine 30 and asparagine 48 contribute to the active site.

This sequence belongs to the acylphosphatase family.

It carries out the reaction an acyl phosphate + H2O = a carboxylate + phosphate + H(+). This is Acylphosphatase (acyP) from Saccharolobus solfataricus (strain ATCC 35092 / DSM 1617 / JCM 11322 / P2) (Sulfolobus solfataricus).